The chain runs to 267 residues: Ribosomal RNA large subunit methyltransferase E (267 aa).

Positions 50, 52, 68, 84, and 109 each coordinate S-adenosyl-L-methionine. The active-site Proton acceptor is the lysine 149. Positions 196-255 (PLKIDDKFDVTIKKIGAKGNGIAFVEDFVVFMQDEVKKGENVRIKIVDVKPEFAFAIVIG) constitute a TRAM domain.

The protein belongs to the class I-like SAM-binding methyltransferase superfamily. RNA methyltransferase RlmE family.

It localises to the cytoplasm. It catalyses the reaction uridine(2552) in 23S rRNA + S-adenosyl-L-methionine = 2'-O-methyluridine(2552) in 23S rRNA + S-adenosyl-L-homocysteine + H(+). Its function is as follows. Specifically methylates the uridine in position 2552 of 23S rRNA at the 2'-O position of the ribose in the fully assembled 50S ribosomal subunit. This is Ribosomal RNA large subunit methyltransferase E from Methanococcoides burtonii (strain DSM 6242 / NBRC 107633 / OCM 468 / ACE-M).